Reading from the N-terminus, the 115-residue chain is Small ribosomal subunit protein uS17 (115 aa).

Belongs to the universal ribosomal protein uS17 family. As to quaternary structure, part of the 30S ribosomal subunit.

One of the primary rRNA binding proteins, it binds specifically to the 5'-end of 16S ribosomal RNA. The polypeptide is Small ribosomal subunit protein uS17 (Granulibacter bethesdensis (strain ATCC BAA-1260 / CGDNIH1)).